A 274-amino-acid chain; its full sequence is Protein CIMAP1C (274 aa).

The disordered stretch occupies residues 1–27 (MKLPKGTRSSVYFAQHPEKEPLPSRQE). The segment covering 16-27 (HPEKEPLPSRQE) has biased composition (basic and acidic residues). STPGR repeat units lie at residues 199 to 224 (PGPT…MAKR) and 235 to 260 (PGPG…MGIK).

The protein belongs to the CIMAP family.

The sequence is that of Protein CIMAP1C from Homo sapiens (Human).